Consider the following 135-residue polypeptide: D-ribose pyranase (135 aa).

Residue histidine 20 is the Proton donor of the active site. Substrate is bound by residues aspartate 28, histidine 102, and tyrosine 124 to asparagine 126.

Belongs to the RbsD / FucU family. RbsD subfamily. In terms of assembly, homodecamer.

The protein resides in the cytoplasm. The enzyme catalyses beta-D-ribopyranose = beta-D-ribofuranose. It functions in the pathway carbohydrate metabolism; D-ribose degradation; D-ribose 5-phosphate from beta-D-ribopyranose: step 1/2. Catalyzes the interconversion of beta-pyran and beta-furan forms of D-ribose. The protein is D-ribose pyranase of Rhodopirellula baltica (strain DSM 10527 / NCIMB 13988 / SH1).